Reading from the N-terminus, the 311-residue chain is tRNA-cytidine(32) 2-sulfurtransferase (311 aa).

The PP-loop motif signature appears at 47–52 (SGGKDS). Residues C122, C125, and C213 each coordinate [4Fe-4S] cluster.

It belongs to the TtcA family. Homodimer. The cofactor is Mg(2+). [4Fe-4S] cluster is required as a cofactor.

The protein resides in the cytoplasm. It carries out the reaction cytidine(32) in tRNA + S-sulfanyl-L-cysteinyl-[cysteine desulfurase] + AH2 + ATP = 2-thiocytidine(32) in tRNA + L-cysteinyl-[cysteine desulfurase] + A + AMP + diphosphate + H(+). It participates in tRNA modification. Functionally, catalyzes the ATP-dependent 2-thiolation of cytidine in position 32 of tRNA, to form 2-thiocytidine (s(2)C32). The sulfur atoms are provided by the cysteine/cysteine desulfurase (IscS) system. The sequence is that of tRNA-cytidine(32) 2-sulfurtransferase from Escherichia coli O157:H7.